We begin with the raw amino-acid sequence, 278 residues long: MTTNSVTSGRRGEPLVLRDLSKRFGAREVLRNTQLRVEPGQFIAIVGRSGCGKSTLLRLVAGLETASAGSITVNDKLLTGLSDDTRIMFQDARLLPWKRIIDNVALGLPKDRRAEALKVLDQVGLADRANDWPARLSGGQRQRVSLARALVHKPRLLLLDEPLGALDALTRIEMHRLIEDLWRASGFTALLVTHDVQEAVALADRVILIEDGRIALDETVSLARPRSQGDAAFAALEKRILDRVLQKPAAPERESFTHPNDGEPRWPGVPAHGVRWAV.

Residues 15–236 (LVLRDLSKRF…SQGDAAFAAL (222 aa)) form the ABC transporter domain. 47-54 (GRSGCGKS) contacts ATP. The segment covering 251-264 (PERESFTHPNDGEP) has biased composition (basic and acidic residues). The disordered stretch occupies residues 251–278 (PERESFTHPNDGEPRWPGVPAHGVRWAV).

It belongs to the ABC transporter superfamily. Aliphatic sulfonates importer (TC 3.A.1.17.2) family. In terms of assembly, the complex is composed of two ATP-binding proteins (SsuB), two transmembrane proteins (SsuC) and a solute-binding protein (SsuA).

It localises to the cell inner membrane. The enzyme catalyses ATP + H2O + aliphatic sulfonate-[sulfonate-binding protein]Side 1 = ADP + phosphate + aliphatic sulfonateSide 2 + [sulfonate-binding protein]Side 1.. Its function is as follows. Part of the ABC transporter complex SsuABC involved in aliphatic sulfonates import. Responsible for energy coupling to the transport system. The protein is Aliphatic sulfonates import ATP-binding protein SsuB of Albidiferax ferrireducens (strain ATCC BAA-621 / DSM 15236 / T118) (Rhodoferax ferrireducens).